The chain runs to 427 residues: Acyltransferase fer5 (427 aa).

Residues 1–24 (MTAATSVQPSPAPRQPGLRATFNP) are disordered. A substrate-binding site is contributed by His-342. Glu-380 (proton acceptor) is an active-site residue.

This sequence belongs to the lysine N-acyltransferase mbtK family.

Its pathway is siderophore biosynthesis. Acyltransferase; part of the gene cluster that mediates the biosynthesis of siderophore ferrichrome A which is contributing to organismal virulence. The first step of ferrichrome A biosynthesis is performed by the HMG-CoA synthase hcs1 which catalyzes the generation of HMG-CoA and CoA using acetoacetyl-CoA and acetyl-CoA as substrates. The enoyl-CoA isomerase/hydratase fer4 then catalyzes the conversion of hcs1-produced HMG-CoA to methylglutaconyl-CoA. The acyltransferase fer5 then fuses the fer4-generated methylglutaconyl-CoA with sid1-generated hydroxyornithine to yield methylglutaconyl hydroxyornithine. Methylglutaconyl hydroxyornithine is then available for use by the NRPS fer3 to generate ferrichrome A. The polypeptide is Acyltransferase fer5 (Mycosarcoma maydis (Corn smut fungus)).